A 359-amino-acid polypeptide reads, in one-letter code: Mitochondrial glutathione transporter SLC25A39 (359 aa).

The Mitochondrial intermembrane segment spans residues 1–14; it reads MADQDPGGISPLQQ. Solcar repeat units lie at residues 9–151, 159–243, and 253–347; these read ISPL…LKAF, SDLY…VKSW, and TSVG…GKNF. The helical transmembrane segment at 15–35 threads the bilayer; the sequence is MVASGAGAVVTSLFMTPLDVV. Residues 36–121 are Mitochondrial matrix-facing; the sequence is KVRLQSQRPS…VKIVRHEGTR (86 aa). [2Fe-2S] cluster-binding residues include Cys74, Cys78, Cys88, and Cys94. A helical transmembrane segment spans residues 122–142; it reads TLWSGLPATLVMTVPATAAYF. Residues 143-164 lie on the Mitochondrial intermembrane side of the membrane; that stretch reads TAYDQLKAFLCGRALTSDLYAP. Residues 165–185 traverse the membrane as a helical segment; the sequence is MVAGALARLGTVTVISPLELV. Residues 186–214 are Mitochondrial matrix-facing; it reads RTKLQAQHLSYRELGTCVRAAVAQGGWRS. Residues 215–235 traverse the membrane as a helical segment; it reads LWLGWGPTALRDVPFSALYWF. The Mitochondrial intermembrane segment spans residues 236 to 255; the sequence is NYELVKSWLSGLRPKDQTSV. A helical membrane pass occupies residues 256-276; the sequence is GISFVAGGISGMVAATLTLPF. Residues 277–317 are Mitochondrial matrix-facing; the sequence is DVVKTQRQVALGAVEALRVMPLNTDSTWLLLRRILAESGTR. Residues 318 to 338 traverse the membrane as a helical segment; the sequence is GLFAGFLPRIIKAAPSCAIMI. At 339–359 the chain is on the mitochondrial intermembrane side; the sequence is STYEFGKNFFQRLNREQLLSP.

This sequence belongs to the mitochondrial carrier (TC 2.A.29) family. Cleaved and degraded by AFG3L2; degradation by AFG3L2 is regulated by the ability of SLC25A39 to bind iron-sulfur. In absence of mitochondrial glutathione, SLC25A39 binds iron-sulfur, preventing cleavage and degradation by AFG3L2. The presence of mitochondrial glutathione prevents iron-sulfur-binding to SLC25A39, promoting cleavage and degradation by AFG3L2.

The protein localises to the mitochondrion inner membrane. It catalyses the reaction glutathione(in) = glutathione(out). With respect to regulation, the activity of SLC25A39 is regulated by levels of mitochondrial glutathione via its ability to bind [2Fe-2S] iron-sulfur cluster. Upon physiological levels of mitochondrial glutathione, glutathione prevents iron-sulfur-binding to SLC25A39 promoting cleavage and degradation by AFG3L2. Upon depletion of mitochondrial glutathione, SLC25A39 binds iron-sulfur, preventing cleavage and degradation by AFG3L2. Its function is as follows. Mitochondrial transporter required for glutathione import into mitochondria. Glutathione, which plays key roles in oxidative metabolism, is produced exclusively in the cytosol and is imported in many organelles. Mitochondrial glutathione is required for the activity and stability of proteins containing iron-sulfur clusters, as well as erythropoiesis. This is Mitochondrial glutathione transporter SLC25A39 (SLC25A39) from Bos taurus (Bovine).